A 213-amino-acid polypeptide reads, in one-letter code: uncharacterized protein (213 aa).

2 coiled-coil regions span residues 54–78 (KEQT…NLKL) and 108–151 (VKDV…STSK). The segment covering 122-142 (IEKEKEEEKAAKKAEKAEEKK) has biased composition (basic and acidic residues). Positions 122–213 (IEKEKEEEKA…FGGKPTGQIW (92 aa)) are disordered. Low complexity predominate over residues 146 to 188 (KNSTSKSGSKSSKSSSGSSKSSSKSSKSSKSSSGSSKSSSKSS). The span at 189-199 (KNSKKSSKKSN) shows a compositional bias: basic residues.

Belongs to the mimivirus R546 family.

This is an uncharacterized protein from Acanthamoeba polyphaga (Amoeba).